Reading from the N-terminus, the 62-residue chain is Sec-independent protein translocase protein TatA (62 aa).

The helical transmembrane segment at 10–32 (LLIILIIVIAIFGAGKLAGLGGA) threads the bilayer.

This sequence belongs to the TatA/E family. As to quaternary structure, forms a complex with TatC.

The protein localises to the cell membrane. Part of the twin-arginine translocation (Tat) system that transports large folded proteins containing a characteristic twin-arginine motif in their signal peptide across membranes. TatA could form the protein-conducting channel of the Tat system. This Chloroflexus aurantiacus (strain ATCC 29366 / DSM 635 / J-10-fl) protein is Sec-independent protein translocase protein TatA.